A 205-amino-acid chain; its full sequence is Urease accessory protein UreG (205 aa).

14–21 (GPVGSGKT) provides a ligand contact to GTP.

The protein belongs to the SIMIBI class G3E GTPase family. UreG subfamily. In terms of assembly, homodimer. UreD, UreF and UreG form a complex that acts as a GTP-hydrolysis-dependent molecular chaperone, activating the urease apoprotein by helping to assemble the nickel containing metallocenter of UreC. The UreE protein probably delivers the nickel.

It is found in the cytoplasm. In terms of biological role, facilitates the functional incorporation of the urease nickel metallocenter. This process requires GTP hydrolysis, probably effectuated by UreG. The polypeptide is Urease accessory protein UreG (Enterobacter sp. (strain 638)).